Consider the following 195-residue polypeptide: Holliday junction branch migration complex subunit RuvA (195 aa).

The domain I stretch occupies residues 1–64 (MIKGVEGEIT…DRAPEIYGFK (64 aa)). Positions 65 to 137 (DRAEYNVFLM…LYDLVKDYAV (73 aa)) are domain II. A flexible linker region spans residues 137–141 (VEFPK). The domain III stretch occupies residues 142–195 (ELSDVSEDAVGALTALGFDMTSAKLAVNEVLKEQTVENTQELVRKALRKLNKTR).

Belongs to the RuvA family. In terms of assembly, homotetramer. Forms an RuvA(8)-RuvB(12)-Holliday junction (HJ) complex. HJ DNA is sandwiched between 2 RuvA tetramers; dsDNA enters through RuvA and exits via RuvB. An RuvB hexamer assembles on each DNA strand where it exits the tetramer. Each RuvB hexamer is contacted by two RuvA subunits (via domain III) on 2 adjacent RuvB subunits; this complex drives branch migration. In the full resolvosome a probable DNA-RuvA(4)-RuvB(12)-RuvC(2) complex forms which resolves the HJ.

It is found in the cytoplasm. Functionally, the RuvA-RuvB-RuvC complex processes Holliday junction (HJ) DNA during genetic recombination and DNA repair, while the RuvA-RuvB complex plays an important role in the rescue of blocked DNA replication forks via replication fork reversal (RFR). RuvA specifically binds to HJ cruciform DNA, conferring on it an open structure. The RuvB hexamer acts as an ATP-dependent pump, pulling dsDNA into and through the RuvAB complex. HJ branch migration allows RuvC to scan DNA until it finds its consensus sequence, where it cleaves and resolves the cruciform DNA. In Kosmotoga olearia (strain ATCC BAA-1733 / DSM 21960 / TBF 19.5.1), this protein is Holliday junction branch migration complex subunit RuvA.